The primary structure comprises 447 residues: Probable glycine dehydrogenase (decarboxylating) subunit 1 (447 aa).

The protein belongs to the GcvP family. N-terminal subunit subfamily. As to quaternary structure, the glycine cleavage system is composed of four proteins: P, T, L and H. In this organism, the P 'protein' is a heterodimer of two subunits.

It catalyses the reaction N(6)-[(R)-lipoyl]-L-lysyl-[glycine-cleavage complex H protein] + glycine + H(+) = N(6)-[(R)-S(8)-aminomethyldihydrolipoyl]-L-lysyl-[glycine-cleavage complex H protein] + CO2. Its function is as follows. The glycine cleavage system catalyzes the degradation of glycine. The P protein binds the alpha-amino group of glycine through its pyridoxal phosphate cofactor; CO(2) is released and the remaining methylamine moiety is then transferred to the lipoamide cofactor of the H protein. The polypeptide is Probable glycine dehydrogenase (decarboxylating) subunit 1 (Bacillus thuringiensis subsp. konkukian (strain 97-27)).